The primary structure comprises 693 residues: Glycine--tRNA ligase beta subunit (693 aa).

The protein belongs to the class-II aminoacyl-tRNA synthetase family. In terms of assembly, tetramer of two alpha and two beta subunits.

It is found in the cytoplasm. It carries out the reaction tRNA(Gly) + glycine + ATP = glycyl-tRNA(Gly) + AMP + diphosphate. This is Glycine--tRNA ligase beta subunit from Vibrio campbellii (strain ATCC BAA-1116).